Consider the following 405-residue polypeptide: Argininosuccinate synthase (405 aa).

Residues 10-18 (AYSGGLDTS) and Ala37 contribute to the ATP site. Tyr88 and Ser93 together coordinate L-citrulline. Position 118 (Gly118) interacts with ATP. L-aspartate is bound by residues Thr120, Asn124, and Asp125. Asn124 contacts L-citrulline. Residues Arg128, Ser179, Ser188, Glu264, and Tyr276 each contribute to the L-citrulline site.

It belongs to the argininosuccinate synthase family. Type 1 subfamily. Homotetramer.

The protein resides in the cytoplasm. The catalysed reaction is L-citrulline + L-aspartate + ATP = 2-(N(omega)-L-arginino)succinate + AMP + diphosphate + H(+). It functions in the pathway amino-acid biosynthesis; L-arginine biosynthesis; L-arginine from L-ornithine and carbamoyl phosphate: step 2/3. The protein is Argininosuccinate synthase of Pseudomonas savastanoi pv. phaseolicola (strain 1448A / Race 6) (Pseudomonas syringae pv. phaseolicola (strain 1448A / Race 6)).